Consider the following 109-residue polypeptide: Nucleoid-associated protein Ldb1634 (109 aa).

Positions Met-18–Glu-40 are disordered.

This sequence belongs to the YbaB/EbfC family. As to quaternary structure, homodimer.

It is found in the cytoplasm. The protein localises to the nucleoid. In terms of biological role, binds to DNA and alters its conformation. May be involved in regulation of gene expression, nucleoid organization and DNA protection. This Lactobacillus delbrueckii subsp. bulgaricus (strain ATCC 11842 / DSM 20081 / BCRC 10696 / JCM 1002 / NBRC 13953 / NCIMB 11778 / NCTC 12712 / WDCM 00102 / Lb 14) protein is Nucleoid-associated protein Ldb1634.